Here is a 339-residue protein sequence, read N- to C-terminus: Dihydroorotate dehydrogenase (quinone) (339 aa).

Residues 62 to 66 (AGMDK) and Thr-86 each bind FMN. Lys-66 is a substrate binding site. 111 to 115 (NRMGF) contributes to the substrate binding site. FMN contacts are provided by Asn-139 and Asn-172. Asn-172 serves as a coordination point for substrate. Ser-175 (nucleophile) is an active-site residue. Position 177 (Asn-177) interacts with substrate. Lys-217 and Thr-245 together coordinate FMN. Substrate is bound at residue 246–247 (NT). FMN is bound by residues Gly-268, Gly-297, and 318 to 319 (YS).

The protein belongs to the dihydroorotate dehydrogenase family. Type 2 subfamily. Monomer. FMN is required as a cofactor.

It is found in the cell membrane. It catalyses the reaction (S)-dihydroorotate + a quinone = orotate + a quinol. It functions in the pathway pyrimidine metabolism; UMP biosynthesis via de novo pathway; orotate from (S)-dihydroorotate (quinone route): step 1/1. Functionally, catalyzes the conversion of dihydroorotate to orotate with quinone as electron acceptor. This chain is Dihydroorotate dehydrogenase (quinone), found in Shewanella oneidensis (strain ATCC 700550 / JCM 31522 / CIP 106686 / LMG 19005 / NCIMB 14063 / MR-1).